A 582-amino-acid chain; its full sequence is Urocanate reductase (582 aa).

An N-terminal signal peptide occupies residues 1-20 (MHYKKSIIGIAVTATAIIAG). Cys21 carries the N-palmitoyl cysteine lipid modification. Residue Cys21 is the site of S-diacylglycerol cysteine attachment. Thr93 carries the FMN phosphoryl threonine modification. Ala143, Glu162, Asn170, Ser171, Gly175, Ala176, Ala285, and Asp352 together coordinate FAD. Arg411 functions as the Proton donor in the catalytic mechanism. His521, Glu550, and Ala565 together coordinate FAD.

Belongs to the FAD-dependent oxidoreductase 2 family. FRD/SDH subfamily. FAD serves as cofactor. Requires FMN as cofactor.

It localises to the cell membrane. The enzyme catalyses dihydrourocanate + A = urocanate + AH2. Its function is as follows. Catalyzes the two-electron reduction of urocanate to dihydrourocanate (also named imidazole propionate or deamino-histidine). The physiological electron donor is unknown; it might be the membrane-bound tetraheme cytochrome c (CymA). Enables anaerobic growth with urocanate as a sole terminal electron acceptor, and thus can provide the cells with a niche where no other bacteria can compete and survive. Is unable to reduce cinnamate and other unsaturated organic acids such as acrylic, crotonic, fumaric and orotic acids. Has no fumarate reductase or succinate dehydrogenase activity. The chain is Urocanate reductase (urdA) from Shewanella oneidensis (strain ATCC 700550 / JCM 31522 / CIP 106686 / LMG 19005 / NCIMB 14063 / MR-1).